The sequence spans 248 residues: 3-deoxy-manno-octulosonate cytidylyltransferase (248 aa).

Belongs to the KdsB family.

It localises to the cytoplasm. The enzyme catalyses 3-deoxy-alpha-D-manno-oct-2-ulosonate + CTP = CMP-3-deoxy-beta-D-manno-octulosonate + diphosphate. It functions in the pathway nucleotide-sugar biosynthesis; CMP-3-deoxy-D-manno-octulosonate biosynthesis; CMP-3-deoxy-D-manno-octulosonate from 3-deoxy-D-manno-octulosonate and CTP: step 1/1. Its pathway is bacterial outer membrane biogenesis; lipopolysaccharide biosynthesis. Activates KDO (a required 8-carbon sugar) for incorporation into bacterial lipopolysaccharide in Gram-negative bacteria. The protein is 3-deoxy-manno-octulosonate cytidylyltransferase of Erwinia tasmaniensis (strain DSM 17950 / CFBP 7177 / CIP 109463 / NCPPB 4357 / Et1/99).